The following is a 350-amino-acid chain: Glyceraldehyde-3-phosphate dehydrogenase (350 aa).

Residues 13 to 14 (TI) and Gly-118 each bind NAD(+). Residue 147 to 149 (SCN) coordinates D-glyceraldehyde 3-phosphate. Cys-148 functions as the Nucleophile in the catalytic mechanism. An NAD(+)-binding site is contributed by Arg-176. Position 202–203 (202–203 (HG)) interacts with D-glyceraldehyde 3-phosphate. Gln-309 provides a ligand contact to NAD(+). Residues 327 to 350 (LEEDPEASMDATDSALGVLNSPPL) are disordered.

This sequence belongs to the glyceraldehyde-3-phosphate dehydrogenase family. As to quaternary structure, homotetramer.

It localises to the cytoplasm. The enzyme catalyses D-glyceraldehyde 3-phosphate + phosphate + NADP(+) = (2R)-3-phospho-glyceroyl phosphate + NADPH + H(+). The catalysed reaction is D-glyceraldehyde 3-phosphate + phosphate + NAD(+) = (2R)-3-phospho-glyceroyl phosphate + NADH + H(+). It participates in carbohydrate degradation; glycolysis; pyruvate from D-glyceraldehyde 3-phosphate: step 1/5. In Methanopyrus kandleri (strain AV19 / DSM 6324 / JCM 9639 / NBRC 100938), this protein is Glyceraldehyde-3-phosphate dehydrogenase.